Reading from the N-terminus, the 440-residue chain is 6-phospho-alpha-glucosidase (440 aa).

4-70 is a binding site for NAD(+); it reads FSIVVAGGGS…PDINFVYTTD (67 aa). Arginine 93 and asparagine 147 together coordinate substrate. Cysteine 169 is a binding site for Mn(2+). Catalysis depends on aspartate 170, which acts as the Proton donor. Histidine 200 contacts Mn(2+). The active-site Proton acceptor is tyrosine 263. Arginine 283 is a binding site for substrate.

This sequence belongs to the glycosyl hydrolase 4 family. As to quaternary structure, homodimer. NAD(+) serves as cofactor. Mn(2+) is required as a cofactor.

Its pathway is glycan degradation; palatinose degradation. In vitro, readily hydrolyzes p-nitrophenyl-alpha-D-glucopyranoside 6-phosphate (pNPalphaG6P), a chromogenic analog of the phosphorylated isomers of sucrose. In vivo, is probably involved in the degradation of the 6-phosphate derivatives of the sucrose isomers trehalulose, turanose, maltulose and palatinose, catalyzing their hydrolysis into glucose 6-phosphate (G6P) and fructose, which allows the bacterium to use these sugars as energy sources for growth. Is not able to hydrolyze the C2 or C4 chromogenic stereomers (i.e. pNPalpha-mannopyranoside-6P and pNPalpha-galactopyranoside-6P, respectively). This is 6-phospho-alpha-glucosidase (pagL) from Leptotrichia buccalis (strain ATCC 14201 / DSM 1135 / JCM 12969 / NCTC 10249 / C-1013-b).